A 1377-amino-acid chain; its full sequence is DNA-directed RNA polymerase subunit beta' (1377 aa).

Positions 70, 72, 85, and 88 each coordinate Zn(2+). Residues Asp460, Asp462, and Asp464 each coordinate Mg(2+). Residues Cys808, Cys882, Cys889, and Cys892 each coordinate Zn(2+).

The protein belongs to the RNA polymerase beta' chain family. In terms of assembly, the RNAP catalytic core consists of 2 alpha, 1 beta, 1 beta' and 1 omega subunit. When a sigma factor is associated with the core the holoenzyme is formed, which can initiate transcription. Requires Mg(2+) as cofactor. It depends on Zn(2+) as a cofactor.

The catalysed reaction is RNA(n) + a ribonucleoside 5'-triphosphate = RNA(n+1) + diphosphate. DNA-dependent RNA polymerase catalyzes the transcription of DNA into RNA using the four ribonucleoside triphosphates as substrates. The chain is DNA-directed RNA polymerase subunit beta' from Geotalea uraniireducens (strain Rf4) (Geobacter uraniireducens).